The primary structure comprises 348 residues: Heat-inducible transcription repressor HrcA (348 aa).

This sequence belongs to the HrcA family.

Negative regulator of class I heat shock genes (grpE-dnaK-dnaJ and groELS operons). Prevents heat-shock induction of these operons. This chain is Heat-inducible transcription repressor HrcA, found in Syntrophobacter fumaroxidans (strain DSM 10017 / MPOB).